The sequence spans 156 residues: ATP synthase subunit b (156 aa).

The helical transmembrane segment at 12–32 threads the bilayer; the sequence is VAFLIFVLFCMKYVWPPVITA.

The protein belongs to the ATPase B chain family. As to quaternary structure, F-type ATPases have 2 components, F(1) - the catalytic core - and F(0) - the membrane proton channel. F(1) has five subunits: alpha(3), beta(3), gamma(1), delta(1), epsilon(1). F(0) has three main subunits: a(1), b(2) and c(10-14). The alpha and beta chains form an alternating ring which encloses part of the gamma chain. F(1) is attached to F(0) by a central stalk formed by the gamma and epsilon chains, while a peripheral stalk is formed by the delta and b chains.

It localises to the cell inner membrane. In terms of biological role, f(1)F(0) ATP synthase produces ATP from ADP in the presence of a proton or sodium gradient. F-type ATPases consist of two structural domains, F(1) containing the extramembraneous catalytic core and F(0) containing the membrane proton channel, linked together by a central stalk and a peripheral stalk. During catalysis, ATP synthesis in the catalytic domain of F(1) is coupled via a rotary mechanism of the central stalk subunits to proton translocation. Component of the F(0) channel, it forms part of the peripheral stalk, linking F(1) to F(0). The protein is ATP synthase subunit b of Pseudomonas putida (strain GB-1).